Reading from the N-terminus, the 488-residue chain is 3-octaprenyl-4-hydroxybenzoate carboxy-lyase (488 aa).

Residue asparagine 172 coordinates Mn(2+). Prenylated FMN contacts are provided by residues 175-177 (IYR), 189-191 (RWL), and 194-195 (RG). Residue glutamate 238 participates in Mn(2+) binding. The active-site Proton donor is the aspartate 287.

It belongs to the UbiD family. As to quaternary structure, homohexamer. Prenylated FMN is required as a cofactor. Mn(2+) serves as cofactor.

The protein localises to the cell membrane. The enzyme catalyses a 4-hydroxy-3-(all-trans-polyprenyl)benzoate + H(+) = a 2-(all-trans-polyprenyl)phenol + CO2. Its pathway is cofactor biosynthesis; ubiquinone biosynthesis. Functionally, catalyzes the decarboxylation of 3-octaprenyl-4-hydroxy benzoate to 2-octaprenylphenol, an intermediate step in ubiquinone biosynthesis. In Pseudomonas paraeruginosa (strain DSM 24068 / PA7) (Pseudomonas aeruginosa (strain PA7)), this protein is 3-octaprenyl-4-hydroxybenzoate carboxy-lyase.